Reading from the N-terminus, the 709-residue chain is Potassium-transporting ATPase ATP-binding subunit (709 aa).

Helical transmembrane passes span 55-75 (VMLVVLVGAVITTLAFLRDLA), 86-106 (GLVAAFLWFTVLFANFAEAMA), 236-256 (IALNILLAGLTIIFLLAVVTL), and 269-289 (VVVLVALLVCLIPTTIGALLS). Residue aspartate 324 is the 4-aspartylphosphate intermediate of the active site. ATP contacts are provided by residues aspartate 361, glutamate 365, 395–402 (FTAETRMS), and lysine 417. 2 residues coordinate Mg(2+): aspartate 545 and aspartate 549. 3 consecutive transmembrane segments (helical) span residues 615–635 (FAIIPAMFVGLYPVLDKLNVM), 643–663 (AILSAVIFNALVIVALIPLAL), and 688–708 (GLVVPFIGIKLVDLVIVALGV).

It belongs to the cation transport ATPase (P-type) (TC 3.A.3) family. Type IA subfamily. The system is composed of three essential subunits: KdpA, KdpB and KdpC.

The protein resides in the cell membrane. The catalysed reaction is K(+)(out) + ATP + H2O = K(+)(in) + ADP + phosphate + H(+). Its function is as follows. Part of the high-affinity ATP-driven potassium transport (or Kdp) system, which catalyzes the hydrolysis of ATP coupled with the electrogenic transport of potassium into the cytoplasm. This subunit is responsible for energy coupling to the transport system and for the release of the potassium ions to the cytoplasm. This chain is Potassium-transporting ATPase ATP-binding subunit, found in Mycobacterium tuberculosis (strain ATCC 25618 / H37Rv).